A 156-amino-acid polypeptide reads, in one-letter code: Arginine repressor (156 aa).

Belongs to the ArgR family.

It localises to the cytoplasm. The protein operates within amino-acid biosynthesis; L-arginine biosynthesis [regulation]. Its function is as follows. Regulates arginine biosynthesis genes. This is Arginine repressor from Edwardsiella ictaluri (strain 93-146).